A 362-amino-acid polypeptide reads, in one-letter code: Phosphoserine aminotransferase (362 aa).

The L-glutamate site is built by Ser-9 and Arg-42. Pyridoxal 5'-phosphate is bound by residues 76–77 (GR), Trp-102, Thr-153, Asp-174, and Gln-197. An N6-(pyridoxal phosphate)lysine modification is found at Lys-198. A pyridoxal 5'-phosphate-binding site is contributed by 239-240 (NT).

It belongs to the class-V pyridoxal-phosphate-dependent aminotransferase family. SerC subfamily. Homodimer. Pyridoxal 5'-phosphate serves as cofactor.

It is found in the cytoplasm. The enzyme catalyses O-phospho-L-serine + 2-oxoglutarate = 3-phosphooxypyruvate + L-glutamate. The catalysed reaction is 4-(phosphooxy)-L-threonine + 2-oxoglutarate = (R)-3-hydroxy-2-oxo-4-phosphooxybutanoate + L-glutamate. Its pathway is amino-acid biosynthesis; L-serine biosynthesis; L-serine from 3-phospho-D-glycerate: step 2/3. It participates in cofactor biosynthesis; pyridoxine 5'-phosphate biosynthesis; pyridoxine 5'-phosphate from D-erythrose 4-phosphate: step 3/5. Its function is as follows. Catalyzes the reversible conversion of 3-phosphohydroxypyruvate to phosphoserine and of 3-hydroxy-2-oxo-4-phosphonooxybutanoate to phosphohydroxythreonine. The polypeptide is Phosphoserine aminotransferase (Escherichia coli O7:K1 (strain IAI39 / ExPEC)).